A 1265-amino-acid polypeptide reads, in one-letter code: Kinesin-like protein Klp98A (1265 aa).

Positions 3–364 (SLKVAVRVRP…LRYANRAKNI (362 aa)) constitute a Kinesin motor domain. ATP is bound at residue 100 to 107 (GQTGSGKT). Disordered regions lie at residues 597-621 (GASP…DPEL), 828-864 (EAES…DVSK), and 884-954 (VSSP…CTPS). Coiled coils occupy residues 619–670 (PELQ…EEMD) and 768–848 (AQFI…LGNK). 3 stretches are compositionally biased toward polar residues: residues 846 to 857 (GNKSMSTSTSTN), 884 to 901 (VSSP…SNCS), and 917 to 927 (SGSSEETSRTC). Residues 933–946 (SGSGSGSVGIGGSG) are compositionally biased toward gly residues. The stretch at 1035 to 1071 (DLNKAQLDEHIADLQDLQRRYIQMEQEMLQSVQDLEA) forms a coiled coil. The PX domain occupies 1129–1259 (GEHFITIPSF…SFFKKGLFEN (131 aa)).

It belongs to the TRAFAC class myosin-kinesin ATPase superfamily. Kinesin family. As to quaternary structure, interacts with Atg8a and Rab14.

The protein resides in the early endosome. In terms of biological role, plus end-directed motor protein involved in asymmetric cell division of sensory organ precursor (SOP) cells by playing a role in the asymmetric localization of Sara-expressing endosomes to the pIIa daughter cell but not to the pIIb cell. Targets Sara-expressing endosomes to the central spindle which is symmetrically arranged in early cell division. During late cytokinesis, central spindle asymmetry is generated by enrichment of Patronin on the pIIb side which protects microtubules from depolymerization by Klp10A while unprotected microtubules on the pIIa side are disassembled by Klp10A, leading to the asymmetric delivery of Sara-expressing endosomes to the pIIa daughter cell. Also plays a role in regulation of autophagosome formation, fusion and positioning and is required for normal localization of Rab14. This is Kinesin-like protein Klp98A from Drosophila melanogaster (Fruit fly).